Consider the following 199-residue polypeptide: Probable GTP-binding protein EngB (199 aa).

Residues 24 to 197 (EGYEVIFAGR…GARLNTFFGY (174 aa)) form the EngB-type G domain. Residues 32 to 39 (GRSNAGKS), 59 to 63 (GKTQH), 77 to 80 (DLPG), 144 to 147 (TKSD), and 176 to 178 (FSS) each bind GTP. Residues Ser-39 and Thr-61 each contribute to the Mg(2+) site.

Belongs to the TRAFAC class TrmE-Era-EngA-EngB-Septin-like GTPase superfamily. EngB GTPase family. Requires Mg(2+) as cofactor.

Its function is as follows. Necessary for normal cell division and for the maintenance of normal septation. The chain is Probable GTP-binding protein EngB from Ruthia magnifica subsp. Calyptogena magnifica.